A 673-amino-acid polypeptide reads, in one-letter code: DNA ligase (673 aa).

NAD(+) is bound by residues 38 to 42 (DSVYD), 87 to 88 (SL), and glutamate 119. Lysine 121 functions as the N6-AMP-lysine intermediate in the catalytic mechanism. Arginine 142, glutamate 179, lysine 296, and lysine 320 together coordinate NAD(+). Residues cysteine 414, cysteine 417, cysteine 432, and cysteine 438 each contribute to the Zn(2+) site. A BRCT domain is found at 595-673 (VVKSEIAGKT…EEAFLKLLKS (79 aa)).

This sequence belongs to the NAD-dependent DNA ligase family. LigA subfamily. The cofactor is Mg(2+). Mn(2+) is required as a cofactor.

It catalyses the reaction NAD(+) + (deoxyribonucleotide)n-3'-hydroxyl + 5'-phospho-(deoxyribonucleotide)m = (deoxyribonucleotide)n+m + AMP + beta-nicotinamide D-nucleotide.. Its function is as follows. DNA ligase that catalyzes the formation of phosphodiester linkages between 5'-phosphoryl and 3'-hydroxyl groups in double-stranded DNA using NAD as a coenzyme and as the energy source for the reaction. It is essential for DNA replication and repair of damaged DNA. In Coxiella burnetii (strain CbuK_Q154) (Coxiella burnetii (strain Q154)), this protein is DNA ligase.